We begin with the raw amino-acid sequence, 512 residues long: Cytochrome P450 1A2 (512 aa).

O-linked (GlcNAc) serine glycosylation occurs at S65. Position 222 (F222) interacts with substrate. C454 contacts heme.

This sequence belongs to the cytochrome P450 family. In terms of assembly, interacts with PGRMC1; the interaction requires PGRMC1 homodimerization. Requires heme as cofactor.

It is found in the endoplasmic reticulum membrane. It localises to the microsome membrane. It carries out the reaction an organic molecule + reduced [NADPH--hemoprotein reductase] + O2 = an alcohol + oxidized [NADPH--hemoprotein reductase] + H2O + H(+). It catalyses the reaction 17beta-estradiol + reduced [NADPH--hemoprotein reductase] + O2 = 2-hydroxy-17beta-estradiol + oxidized [NADPH--hemoprotein reductase] + H2O + H(+). The enzyme catalyses 17beta-estradiol + reduced [NADPH--hemoprotein reductase] + O2 = 4-hydroxy-17beta-estradiol + oxidized [NADPH--hemoprotein reductase] + H2O + H(+). The catalysed reaction is estrone + reduced [NADPH--hemoprotein reductase] + O2 = 2-hydroxyestrone + oxidized [NADPH--hemoprotein reductase] + H2O + H(+). It carries out the reaction estrone + reduced [NADPH--hemoprotein reductase] + O2 = 4-hydroxyestrone + oxidized [NADPH--hemoprotein reductase] + H2O + H(+). It catalyses the reaction cholesterol + reduced [NADPH--hemoprotein reductase] + O2 = 25-hydroxycholesterol + oxidized [NADPH--hemoprotein reductase] + H2O + H(+). The enzyme catalyses all-trans-retinol + reduced [NADPH--hemoprotein reductase] + O2 = all-trans-retinal + oxidized [NADPH--hemoprotein reductase] + 2 H2O + H(+). The catalysed reaction is all-trans-retinal + reduced [NADPH--hemoprotein reductase] + O2 = all-trans-retinoate + oxidized [NADPH--hemoprotein reductase] + H2O + 2 H(+). It carries out the reaction (5Z,8Z,11Z,14Z)-eicosatetraenoate + reduced [NADPH--hemoprotein reductase] + O2 = (14R,15S)-epoxy-(5Z,8Z,11Z)-eicosatrienoate + oxidized [NADPH--hemoprotein reductase] + H2O + H(+). It catalyses the reaction (5Z,8Z,11Z,14Z)-eicosatetraenoate + reduced [NADPH--hemoprotein reductase] + O2 = (14S,15R)-epoxy-(5Z,8Z,11Z)-eicosatrienoate + oxidized [NADPH--hemoprotein reductase] + H2O + H(+). The enzyme catalyses (5Z,8Z,11Z,14Z,17Z)-eicosapentaenoate + reduced [NADPH--hemoprotein reductase] + O2 = (17R,18S)-epoxy-(5Z,8Z,11Z,14Z)-eicosatetraenoate + oxidized [NADPH--hemoprotein reductase] + H2O + H(+). The catalysed reaction is (4Z,7Z,10Z,13Z,16Z,19Z)-docosahexaenoate + reduced [NADPH--hemoprotein reductase] + O2 = (19R,20S)-epoxy-(4Z,7Z,10Z,13Z,16Z)-docosapentaenoate + oxidized [NADPH--hemoprotein reductase] + H2O + H(+). It carries out the reaction (5S)-hydroperoxy-(6E,8Z,11Z,14Z)-eicosatetraenoate = 5-oxo-(6E,8Z,11Z,14Z)-eicosatetraenoate + H2O. It catalyses the reaction (12S)-hydroperoxy-(5Z,8Z,10E,14Z)-eicosatetraenoate = 12-oxo-(5Z,8Z,10E,14Z)-eicosatetraenoate + H2O. The enzyme catalyses (15S)-hydroperoxy-(5Z,8Z,11Z,13E)-eicosatetraenoate = 15-oxo-(5Z,8Z,11Z,13E)-eicosatetraenoate + H2O. The catalysed reaction is (13S)-hydroperoxy-(9Z,11E)-octadecadienoate = 13-oxo-(9Z,11E)-octadecadienoate + H2O. It carries out the reaction (5Z,8Z,11Z,14Z)-eicosatetraenoate + reduced [NADPH--hemoprotein reductase] + O2 = 13-hydroxy-(5Z,8Z,11Z,14Z)-eicosatetraenoate + oxidized [NADPH--hemoprotein reductase] + H2O + H(+). It catalyses the reaction (5Z,8Z,11Z,14Z)-eicosatetraenoate + reduced [NADPH--hemoprotein reductase] + O2 = 19-hydroxy-(5Z,8Z,11Z,14Z)-eicosatetraenoate + oxidized [NADPH--hemoprotein reductase] + H2O + H(+). The enzyme catalyses (9Z,12Z)-octadecadienoate + reduced [NADPH--hemoprotein reductase] + O2 = 11-hydroxy-(9Z,12Z)-octadecadienoate + oxidized [NADPH--hemoprotein reductase] + H2O + H(+). It functions in the pathway cofactor metabolism; retinol metabolism. Its pathway is steroid metabolism; cholesterol metabolism. It participates in lipid metabolism; arachidonate metabolism. Its function is as follows. A cytochrome P450 monooxygenase involved in the metabolism of various endogenous substrates, including fatty acids, steroid hormones and vitamins. Mechanistically, uses molecular oxygen inserting one oxygen atom into a substrate, and reducing the second into a water molecule, with two electrons provided by NADPH via cytochrome P450 reductase (NADPH--hemoprotein reductase). Catalyzes the hydroxylation of carbon-hydrogen bonds. Exhibits high catalytic activity for the formation of hydroxyestrogens from estrone (E1) and 17beta-estradiol (E2), namely 2-hydroxy E1 and E2. Metabolizes cholesterol toward 25-hydroxycholesterol, a physiological regulator of cellular cholesterol homeostasis. May act as a major enzyme for all-trans retinoic acid biosynthesis in the liver. Catalyzes two successive oxidative transformation of all-trans retinol to all-trans retinal and then to the active form all-trans retinoic acid. Primarily catalyzes stereoselective epoxidation of the last double bond of polyunsaturated fatty acids (PUFA), displaying a strong preference for the (R,S) stereoisomer. Catalyzes bisallylic hydroxylation and omega-1 hydroxylation of PUFA. May also participate in eicosanoids metabolism by converting hydroperoxide species into oxo metabolites (lipoxygenase-like reaction, NADPH-independent). Plays a role in the oxidative metabolism of xenobiotics. Catalyzes the N-hydroxylation of heterocyclic amines and the O-deethylation of phenacetin. Metabolizes caffeine via N3-demethylation. The chain is Cytochrome P450 1A2 (CYP1A2) from Felis catus (Cat).